A 612-amino-acid polypeptide reads, in one-letter code: Glucoamylase (612 aa).

The signal sequence occupies residues 1-19; it reads MVSFSSCLRALALGSSVLA. A propeptide spanning residues 20–25 is cleaved from the precursor; it reads VQPVLR. Asparagine 39 carries an N-linked (GlcNAc...) asparagine glycan. Tryptophan 146 lines the substrate pocket. Residue aspartate 202 is the Proton acceptor of the active site. Residue glutamate 205 is the Proton donor of the active site. Cystine bridges form between cysteine 236–cysteine 239, cysteine 248–cysteine 475, and cysteine 288–cysteine 296. Residues 506 to 612 enclose the CBM20 domain; it reads CQVPTTVSVT…KSAVQSDVWR (107 aa).

It belongs to the glycosyl hydrolase 15 family.

It catalyses the reaction Hydrolysis of terminal (1-&gt;4)-linked alpha-D-glucose residues successively from non-reducing ends of the chains with release of beta-D-glucose.. In Aspergillus oryzae (strain ATCC 42149 / RIB 40) (Yellow koji mold), this protein is Glucoamylase (glaA).